Here is a 98-residue protein sequence, read N- to C-terminus: Co-chaperonin GroES (98 aa).

This sequence belongs to the GroES chaperonin family. Heptamer of 7 subunits arranged in a ring. Interacts with the chaperonin GroEL.

It localises to the cytoplasm. In terms of biological role, together with the chaperonin GroEL, plays an essential role in assisting protein folding. The GroEL-GroES system forms a nano-cage that allows encapsulation of the non-native substrate proteins and provides a physical environment optimized to promote and accelerate protein folding. GroES binds to the apical surface of the GroEL ring, thereby capping the opening of the GroEL channel. The sequence is that of Co-chaperonin GroES from Agrobacterium fabrum (strain C58 / ATCC 33970) (Agrobacterium tumefaciens (strain C58)).